The chain runs to 221 residues: 21 kDa seed protein (221 aa).

Positions Met-1–Ala-26 are cleaved as a signal peptide. Residues Cys-69 and Cys-116 are joined by a disulfide bond.

Belongs to the protease inhibitor I3 (leguminous Kunitz-type inhibitor) family.

The protein is 21 kDa seed protein (ASP) of Theobroma cacao (Cacao).